The sequence spans 125 residues: NADPH-dependent 7-cyano-7-deazaguanine reductase (125 aa).

C40 functions as the Thioimide intermediate in the catalytic mechanism. D47 acts as the Proton donor in catalysis. Residues 62-64 (LET) and 81-82 (HE) contribute to the substrate site.

This sequence belongs to the GTP cyclohydrolase I family. QueF type 1 subfamily.

It localises to the cytoplasm. It catalyses the reaction 7-aminomethyl-7-carbaguanine + 2 NADP(+) = 7-cyano-7-deazaguanine + 2 NADPH + 3 H(+). The protein operates within tRNA modification; tRNA-queuosine biosynthesis. Catalyzes the NADPH-dependent reduction of 7-cyano-7-deazaguanine (preQ0) to 7-aminomethyl-7-deazaguanine (preQ1). In Frankia casuarinae (strain DSM 45818 / CECT 9043 / HFP020203 / CcI3), this protein is NADPH-dependent 7-cyano-7-deazaguanine reductase.